Reading from the N-terminus, the 352-residue chain is Molybdenum import ATP-binding protein ModC (352 aa).

An ABC transporter domain is found at 1-229 (MLELNFSQTL…SVMNPWLPKE (229 aa)). Position 31-38 (31-38 (GVSGAGKT)) interacts with ATP. The region spanning 289–352 (QTSIRNVLRA…AQIKSVSITA (64 aa)) is the Mop domain.

The protein belongs to the ABC transporter superfamily. Molybdate importer (TC 3.A.1.8) family. In terms of assembly, the complex is composed of two ATP-binding proteins (ModC), two transmembrane proteins (ModB) and a solute-binding protein (ModA).

The protein localises to the cell inner membrane. The enzyme catalyses molybdate(out) + ATP + H2O = molybdate(in) + ADP + phosphate + H(+). In terms of biological role, part of the ABC transporter complex ModABC involved in molybdenum import. Responsible for energy coupling to the transport system. The sequence is that of Molybdenum import ATP-binding protein ModC from Escherichia coli O6:K15:H31 (strain 536 / UPEC).